A 153-amino-acid chain; its full sequence is Endoribonuclease YbeY (153 aa).

Residues His116, His120, and His126 each coordinate Zn(2+).

The protein belongs to the endoribonuclease YbeY family. Zn(2+) serves as cofactor.

The protein resides in the cytoplasm. Its function is as follows. Single strand-specific metallo-endoribonuclease involved in late-stage 70S ribosome quality control and in maturation of the 3' terminus of the 16S rRNA. The sequence is that of Endoribonuclease YbeY from Clavibacter sepedonicus (Clavibacter michiganensis subsp. sepedonicus).